We begin with the raw amino-acid sequence, 64 residues long: Large ribosomal subunit protein bL35 (64 aa).

It belongs to the bacterial ribosomal protein bL35 family.

The protein is Large ribosomal subunit protein bL35 of Streptomyces avermitilis (strain ATCC 31267 / DSM 46492 / JCM 5070 / NBRC 14893 / NCIMB 12804 / NRRL 8165 / MA-4680).